Reading from the N-terminus, the 1383-residue chain is NPC intracellular cholesterol transporter 1 homolog 1 (1383 aa).

The N-terminal stretch at 1–20 (MKQLLIFCLLFGSIFHHGDA) is a signal peptide. 8 cysteine pairs are disulfide-bonded: Cys-22/Cys-76, Cys-28/Cys-39, Cys-65/Cys-111, Cys-77/Cys-115, Cys-99/Cys-246, Cys-102/Cys-167, Cys-182/Cys-187, and Cys-235/Cys-251. A glycan (N-linked (GlcNAc...) asparagine) is linked at Asn-42. Asn-231 is a glycosylation site (N-linked (GlcNAc...) asparagine). 2 consecutive transmembrane segments (helical) span residues 282-302 (IFVM…GFVF) and 353-373 (PKSH…GMIY). Asn-447 carries an N-linked (GlcNAc...) asparagine glycan. Cystine bridges form between Cys-464–Cys-474 and Cys-526–Cys-541. An N-linked (GlcNAc...) asparagine glycan is attached at Asn-558. 6 consecutive transmembrane segments (helical) span residues 627–647 (EIVT…FSLG), 665–685 (ICLG…SWGI), 697–717 (ALVV…FMVV), 746–766 (TMPA…IGGF), 780–800 (GLAV…LFVW), and 856–876 (IITG…SSKI). The 174-residue stretch at 627–800 (EIVTVVIALA…CTIFLALFVW (174 aa)) folds into the SSD domain. 4 cysteine pairs are disulfide-bonded: Cys-929–Cys-934, Cys-976–Cys-1046, Cys-977–Cys-1005, and Cys-988–Cys-1002. N-linked (GlcNAc...) asparagine glycans are attached at residues Asn-993 and Asn-1082. A run of 5 helical transmembrane segments spans residues 1126 to 1146 (IMPI…GIIC), 1157 to 1177 (ACAV…MYIF), 1179 to 1199 (IPVN…LIEF), 1226 to 1246 (IGPI…MFLS), and 1260 to 1280 (LFLI…PILL).

It belongs to the patched family.

The protein resides in the membrane. The catalysed reaction is cholesterol(in) = cholesterol(out). In terms of biological role, involved in the uptake or utilization of cholesterol. Ncr-1 and ncr-2 act redundantly to prevent dauer larva formation under favorable growth conditions, and are required for the normal functioning of ADF, ASI and ASG neurons. The chain is NPC intracellular cholesterol transporter 1 homolog 1 from Caenorhabditis elegans.